The primary structure comprises 223 residues: Ion-translocating oxidoreductase complex subunit E (223 aa).

The next 7 membrane-spanning stretches (helical) occupy residues 17–37, 38–58, 68–88, 91–111, 124–144, 156–176, and 181–201; these read SLVQ…TINA, IGLG…ISIL, IPIY…LLHA, FNLY…CIVV, VISF…MFVI, FLFG…FTFI, and TIIL…VIAF.

It belongs to the NqrDE/RnfAE family. The complex is composed of six subunits: RnfA, RnfB, RnfC, RnfD, RnfE and RnfG.

Its subcellular location is the cell inner membrane. Functionally, part of a membrane-bound complex that couples electron transfer with translocation of ions across the membrane. In Buchnera aphidicola subsp. Schizaphis graminum (strain Sg), this protein is Ion-translocating oxidoreductase complex subunit E.